Reading from the N-terminus, the 123-residue chain is Defensin beta 118 (123 aa).

The first 19 residues, 1–19 (MKLLLLALPMLVLLPQVIP), serve as a signal peptide directing secretion. Disulfide bonds link C27–C54, C34–C48, and C38–C55. Positions 65-123 (VPTTSPTPLSDSTPGIIDDILTVRFTTDYFEVSSKKDMIEESEAGRGTETSLPNVHHSS) are excised as a propeptide. Basic and acidic residues predominate over residues 100 to 110 (KDMIEESEAGR). The interval 100–123 (KDMIEESEAGRGTETSLPNVHHSS) is disordered. The segment covering 112–123 (TETSLPNVHHSS) has biased composition (polar residues).

It belongs to the beta-defensin family. The three-dimensional structure formed by the three intramolecular disulfide bridges is indispensable for antimicrobial activity.

The protein localises to the secreted. Its function is as follows. Host defense peptide that exhibits antimicrobial activity against both Gram-negative bacteria, such as E.coli and S.typhimurium, and Gram-positive bacteria, such as S.aureus and B.subtilis. Inhibits cell adhesion of E.coli on intestinal epithelial enterocytes. Causes rapid permeabilization of both the outer and inner membrane of E.coli, leading to morphological alterations on the bacterial surface. Binds to bacterial lipopolysaccharides (LPS) with high affinity, and may thereby be involved in immunoregulation through LPS neutralization. May contribute to epididymal innate immunity and protect the sperm against attack by microorganisms. In Gorilla gorilla gorilla (Western lowland gorilla), this protein is Defensin beta 118 (DEFB118).